The sequence spans 158 residues: Large ribosomal subunit protein uL11 (158 aa).

This sequence belongs to the universal ribosomal protein uL11 family. Part of the ribosomal stalk of the 50S ribosomal subunit. Interacts with L10 and the large rRNA to form the base of the stalk. L10 forms an elongated spine to which L12 dimers bind in a sequential fashion forming a multimeric L10(L12)X complex.

Functionally, forms part of the ribosomal stalk which helps the ribosome interact with GTP-bound translation factors. This is Large ribosomal subunit protein uL11 from Methanoregula boonei (strain DSM 21154 / JCM 14090 / 6A8).